The sequence spans 86 residues: Small ribosomal subunit protein bS16 (86 aa).

The protein belongs to the bacterial ribosomal protein bS16 family.

This chain is Small ribosomal subunit protein bS16, found in Borreliella afzelii (strain PKo) (Borrelia afzelii).